A 362-amino-acid chain; its full sequence is Chalcone synthase A (362 aa).

Residue Cys-168 is part of the active site.

Belongs to the thiolase-like superfamily. Chalcone/stilbene synthases family.

The catalysed reaction is (E)-4-coumaroyl-CoA + 3 malonyl-CoA + 3 H(+) = 2',4,4',6'-tetrahydroxychalcone + 3 CO2 + 4 CoA. It participates in secondary metabolite biosynthesis; flavonoid biosynthesis. Its function is as follows. The primary product of this enzyme is 4,2',4',6'-tetrahydroxychalcone (also termed naringenin-chalcone or chalcone) which can under specific conditions spontaneously isomerize into naringenin. The polypeptide is Chalcone synthase A (CHSA) (Ipomoea trifida (Morning glory)).